The primary structure comprises 688 residues: Elongation factor G (688 aa).

The 275-residue stretch at 8-282 (EKTRNIGIMA…AIIDYLPSPM (275 aa)) folds into the tr-type G domain. GTP contacts are provided by residues 17–24 (AHIDAGKT), 81–85 (DTPGH), and 135–138 (NKMD).

It belongs to the TRAFAC class translation factor GTPase superfamily. Classic translation factor GTPase family. EF-G/EF-2 subfamily.

The protein localises to the cytoplasm. Its function is as follows. Catalyzes the GTP-dependent ribosomal translocation step during translation elongation. During this step, the ribosome changes from the pre-translocational (PRE) to the post-translocational (POST) state as the newly formed A-site-bound peptidyl-tRNA and P-site-bound deacylated tRNA move to the P and E sites, respectively. Catalyzes the coordinated movement of the two tRNA molecules, the mRNA and conformational changes in the ribosome. This is Elongation factor G from Phytoplasma mali (strain AT).